Here is a 327-residue protein sequence, read N- to C-terminus: 2-methoxy-6-polyprenyl-1,4-benzoquinol methylase, mitochondrial (327 aa).

The N-terminal 42 residues, 1 to 42, are a transit peptide targeting the mitochondrion; the sequence is MAAPGSCALWSYCGRGWSRAMRGCQLLGLRSSWPGDLLSARL. Residues T117, D171, and 199-200 contribute to the S-adenosyl-L-methionine site; that span reads DA.

It belongs to the class I-like SAM-binding methyltransferase superfamily. MenG/UbiE family. Component of a multi-subunit COQ enzyme complex, composed of at least COQ3, COQ4, COQ5, COQ6, COQ7 and COQ9. Interacts with PYURF; the interaction is direct, stabilizes COQ5 protein and associates PYURF with COQ enzyme complex. As to expression, widely expressed, with highest levels in liver, lung, placenta and skeletal muscle.

The protein resides in the mitochondrion inner membrane. It carries out the reaction 2-methoxy-6-(all-trans-decaprenyl)benzene-1,4-diol + S-adenosyl-L-methionine = 5-methoxy-2-methyl-3-(all-trans-decaprenyl)benzene-1,4-diol + S-adenosyl-L-homocysteine + H(+). It participates in cofactor biosynthesis; ubiquinone biosynthesis. Its function is as follows. Methyltransferase required for the conversion of 2-decaprenyl-6-methoxy-1,4-benzoquinol (DDMQH2) to 2-decaprenyl-3-methyl-6-methoxy-1,4-benzoquinol (DMQH2). The protein is 2-methoxy-6-polyprenyl-1,4-benzoquinol methylase, mitochondrial of Homo sapiens (Human).